Here is a 209-residue protein sequence, read N- to C-terminus: Thymidylate kinase (209 aa).

Residue 11–18 (GPDGAGKT) participates in ATP binding.

It belongs to the thymidylate kinase family.

It catalyses the reaction dTMP + ATP = dTDP + ADP. Its function is as follows. Phosphorylation of dTMP to form dTDP in both de novo and salvage pathways of dTTP synthesis. This chain is Thymidylate kinase, found in Streptococcus thermophilus (strain ATCC BAA-250 / LMG 18311).